A 219-amino-acid chain; its full sequence is Zinc finger C2HC domain-containing protein 1B (219 aa).

C2HC/C3H-type zinc fingers lie at residues 14–43 and 117–146; these read ELFP…LFNK and DYIQ…QESR. Zn(2+) contacts are provided by cysteine 18, cysteine 21, histidine 33, cysteine 37, cysteine 121, cysteine 124, histidine 136, and cysteine 140. The segment at 190–219 is disordered; that stretch reads EASAAPTRPAVDPASGAKLRQGFAKSSKKD.

Belongs to the ZC2HC1 family. Zn(2+) is required as a cofactor.

This is Zinc finger C2HC domain-containing protein 1B (ZC2HC1B) from Bos taurus (Bovine).